The primary structure comprises 368 residues: tRNA-specific 2-thiouridylase MnmA (368 aa).

ATP-binding positions include 12–19 (GMSGGVDS) and M38. An interaction with target base in tRNA region spans residues 98–100 (NPD). The Nucleophile role is filled by C103. Cysteines 103 and 200 form a disulfide. G128 provides a ligand contact to ATP. Residues 150-152 (KDQ) are interaction with tRNA. The active-site Cysteine persulfide intermediate is the C200. Positions 313–314 (RY) are interaction with tRNA.

Belongs to the MnmA/TRMU family. As to quaternary structure, interacts with TusE.

Its subcellular location is the cytoplasm. It carries out the reaction S-sulfanyl-L-cysteinyl-[protein] + uridine(34) in tRNA + AH2 + ATP = 2-thiouridine(34) in tRNA + L-cysteinyl-[protein] + A + AMP + diphosphate + H(+). Functionally, catalyzes the 2-thiolation of uridine at the wobble position (U34) of tRNA(Lys), tRNA(Glu) and tRNA(Gln), leading to the formation of s(2)U34, the first step of tRNA-mnm(5)s(2)U34 synthesis. Sulfur is provided by IscS, via a sulfur-relay system. Binds ATP and its substrate tRNAs. The chain is tRNA-specific 2-thiouridylase MnmA from Pectobacterium carotovorum subsp. carotovorum (strain PC1).